A 136-amino-acid chain; its full sequence is Cytidine deaminase (136 aa).

The CMP/dCMP-type deaminase domain maps to 1–128; that stretch reads MNRQELITEA…ELLPGAFSSE (128 aa). 42–44 is a binding site for substrate; it reads NIE. Position 53 (Cys-53) interacts with Zn(2+). The Proton donor role is filled by Glu-55. 2 residues coordinate Zn(2+): Cys-86 and Cys-89.

It belongs to the cytidine and deoxycytidylate deaminase family. In terms of assembly, homotetramer. Zn(2+) is required as a cofactor.

The catalysed reaction is cytidine + H2O + H(+) = uridine + NH4(+). It catalyses the reaction 2'-deoxycytidine + H2O + H(+) = 2'-deoxyuridine + NH4(+). In terms of biological role, this enzyme scavenges exogenous and endogenous cytidine and 2'-deoxycytidine for UMP synthesis. The polypeptide is Cytidine deaminase (cdd) (Bacillus subtilis (strain 168)).